Here is a 63-residue protein sequence, read N- to C-terminus: MPKMKSKSSAAKRFKKTANGFKHRQSFTSHILTKKSTKRKRHLRPKKQVNPSDVPLIKRMLCQ.

2 stretches are compositionally biased toward basic residues: residues 1–25 (MPKM…KHRQ) and 32–47 (LTKK…RPKK). The segment at 1 to 55 (MPKMKSKSSAAKRFKKTANGFKHRQSFTSHILTKKSTKRKRHLRPKKQVNPSDVP) is disordered.

It belongs to the bacterial ribosomal protein bL35 family.

The protein is Large ribosomal subunit protein bL35 of Hahella chejuensis (strain KCTC 2396).